Consider the following 427-residue polypeptide: SAC3 domain-containing protein 1 (427 aa).

Basic and acidic residues-rich tracts occupy residues 1 to 10 and 117 to 127; these read MGRFKGENRS and ADPKRTVKEYS. Disordered regions lie at residues 1–53 and 101–143; these read MGRF…QDAV and LHRL…LLRP. Over residues 134 to 143 the composition is skewed to pro residues; sequence PRPPPSLLRP. One can recognise a PCI domain in the interval 229–397; sequence QVQEGFGSLR…EGLPPPGAYH (169 aa). Ser425 carries the post-translational modification Phosphoserine.

Belongs to the SAC3 family. As to quaternary structure, may be part of a SEM1-containing complex. Present in spleen cells (at protein level).

The protein localises to the cytoplasm. Its subcellular location is the cytoskeleton. The protein resides in the microtubule organizing center. It localises to the centrosome. It is found in the spindle. Its function is as follows. Involved in centrosome duplication and mitotic progression. The chain is SAC3 domain-containing protein 1 (Sac3d1) from Mus musculus (Mouse).